Here is a 245-residue protein sequence, read N- to C-terminus: uncharacterized protein (245 aa).

Residues 33–176 (QRAAYQQVQA…SSQRDMLTAT (144 aa)) are a coiled coil.

This is an uncharacterized protein from Mycobacterium tuberculosis (strain CDC 1551 / Oshkosh).